We begin with the raw amino-acid sequence, 241 residues long: Zinc finger CCHC domain-containing protein 24 (241 aa).

Ser65 and Ser93 each carry phosphoserine. A CCHC-type zinc finger spans residues 132 to 149 (YLCHLCFNKGHYIKDCPQ).

The polypeptide is Zinc finger CCHC domain-containing protein 24 (Mus musculus (Mouse)).